A 215-amino-acid chain; its full sequence is Eukaryotic translation initiation factor 4E-1 (215 aa).

The tract at residues 1–32 (MAEDTETRPASAGAEEREEGEIADDGDGSSAA) is disordered. Over residues 16-27 (EREEGEIADDGD) the composition is skewed to acidic residues. EIF4G-binding stretches follow at residues 40–43 (HPLE) and 50–86 (FDNP…NNIH). MRNA-binding positions include 58 to 63 (RQVAWG), Lys-90, and 108 to 109 (WE). An intrachain disulfide couples Cys-113 to Cys-151. Residues 134-143 (HTLLAMIGEQ) form an EIF4G-binding region. Residues 158-163 (RQKQER) and 203-207 (KRSDK) contribute to the mRNA site.

It belongs to the eukaryotic initiation factor 4E family. As to quaternary structure, EIF4F is a multi-subunit complex, the composition of which varies with external and internal environmental conditions. It is composed of at least EIF4A, EIF4E and EIF4G. EIF4E is also known to interact with other partners. In higher plants two isoforms of EIF4F have been identified, named isoform EIF4F and isoform EIF(iso)4F. Isoform EIF4F has subunits p220 and p26, whereas isoform EIF(iso)4F has subunits p82 and p28. According to the redox status, the Cys-113-Cys-151 disulfide bridge may have a role in regulating protein function by affecting its ability to bind capped mRNA.

It is found in the nucleus. The protein resides in the cytoplasm. Its function is as follows. Component of the protein complex eIF4F, which is involved in the recognition of the mRNA cap, ATP-dependent unwinding of 5'-terminal secondary structure and recruitment of mRNA to the ribosome. Recognizes and binds the 7-methylguanosine-containing mRNA cap during an early step in the initiation of protein synthesis and facilitates ribosome binding by inducing the unwinding of the mRNAs secondary structures. This chain is Eukaryotic translation initiation factor 4E-1, found in Triticum aestivum (Wheat).